The sequence spans 114 residues: Probable divalent-cation tolerance protein cutA homolog (114 aa).

The protein belongs to the CutA family. In terms of assembly, homotrimer.

This Encephalitozoon cuniculi (strain GB-M1) (Microsporidian parasite) protein is Probable divalent-cation tolerance protein cutA homolog.